The sequence spans 312 residues: DNA-directed RNA polymerase subunit alpha (312 aa).

Residues 1-226 (MIEFEKPNIT…EHLDLFTDLT (226 aa)) are alpha N-terminal domain (alpha-NTD). The interval 244–312 (DHVLERTIEE…DLGLGLKNDK (69 aa)) is alpha C-terminal domain (alpha-CTD).

This sequence belongs to the RNA polymerase alpha chain family. In terms of assembly, homodimer. The RNAP catalytic core consists of 2 alpha, 1 beta, 1 beta' and 1 omega subunit. When a sigma factor is associated with the core the holoenzyme is formed, which can initiate transcription.

It carries out the reaction RNA(n) + a ribonucleoside 5'-triphosphate = RNA(n+1) + diphosphate. DNA-dependent RNA polymerase catalyzes the transcription of DNA into RNA using the four ribonucleoside triphosphates as substrates. The sequence is that of DNA-directed RNA polymerase subunit alpha from Streptococcus gordonii (strain Challis / ATCC 35105 / BCRC 15272 / CH1 / DL1 / V288).